Consider the following 283-residue polypeptide: Probable cytochrome c oxidase subunit 3 (283 aa).

6 helical membrane passes run 26–46, 51–71, 94–114, 179–199, 217–237, and 261–281; these read PWPVLTSFALLLLVIGGVSFM, FNIYILSAGIISVGYCLYSWW, IGMALFILTEIVFFGVFFASF, CVTALALTILLGIFFTTMQAY, FYLATGFHGAHVIIGTIFLII, and AWYWHFVDVVWLFLFTFVYIF.

This sequence belongs to the cytochrome c oxidase subunit 3 family.

Its subcellular location is the cell membrane. It carries out the reaction 4 Fe(II)-[cytochrome c] + O2 + 8 H(+)(in) = 4 Fe(III)-[cytochrome c] + 2 H2O + 4 H(+)(out). The polypeptide is Probable cytochrome c oxidase subunit 3 (ctaE) (Rickettsia conorii (strain ATCC VR-613 / Malish 7)).